We begin with the raw amino-acid sequence, 1024 residues long: PH and SEC7 domain-containing protein 1 (1024 aa).

The tract at residues 67-96 (CTPLRAPPSPHIAPSPWGPSSPTGQPPPGA) is disordered. Over residues 71–95 (RAPPSPHIAPSPWGPSSPTGQPPPG) the composition is skewed to pro residues. 2 positions are modified to phosphoserine: Ser-126 and Ser-156. Disordered stretches follow at residues 154-195 (STSD…LPNG), 250-277 (PSSG…VAVG), 307-401 (REEA…GPDS), and 434-536 (PTQS…LDST). Acidic residues predominate over residues 348-365 (NEDDEAGGEEDVDDEVFE). Over residues 445-463 (PPQPPAPRPDPPAPAPLAP) the composition is skewed to pro residues. Over residues 495-507 (PRKELPSPSHSED) the composition is skewed to basic and acidic residues. The 195-residue stretch at 512-706 (GAAPLGSEPP…KALYSSIKNE (195 aa)) folds into the SEC7 domain. Phosphoserine is present on Ser-720. Positions 756–869 (AVYKHGALVR…WITRINVVAA (114 aa)) constitute a PH domain. Coiled coils occupy residues 898-924 (LSQE…HRAA) and 956-983 (AALL…AGST). The disordered stretch occupies residues 976–1024 (ALAQAGSTEDGCPPPHSSPSLRPKPTSQPRAQRPGSETRAGAGSTRPKP).

This sequence belongs to the PSD family. As to quaternary structure, interacts with ACTN1. Interacts (ARF6-bound form) with KCNK1; does not interact with KCNK1 in the absence of ARF6. Highest expression detected in brain and some expression detected also in uterus, stomach, ovary and intestine, with isoform 2 being expressed at the highest levels. In the brain, isoform 1 is highly expressed in the strata oriens, radiatum, lacunosum-moleculare of the hippocampal CA1-3 regions and the dentate molecular layer of the hippocampal formation, with lower levels detected in the neuronal cell layers and the stratum lucidum (at protein level). Not detected in tongue, thymus, spleen, lung, heart, liver and kidney.

Its subcellular location is the cell membrane. It is found in the cell projection. The protein localises to the ruffle. It localises to the ruffle membrane. The protein resides in the cleavage furrow. Guanine nucleotide exchange factor for ARF6. Isoform 2 and isoform 3 induce cytoskeletal remodeling, but lead to distinct morphological changes in HeLa cells: isoform 2 induces cell elongation and formation of actin-rich protrusions, whereas isoform 3 promotes the formation of membrane ruffles and loss of stress fibers. The chain is PH and SEC7 domain-containing protein 1 (Psd) from Mus musculus (Mouse).